Consider the following 181-residue polypeptide: Acireductone dioxygenase (181 aa).

Fe(2+) is bound by residues H91, H93, E97, and H136. 4 residues coordinate Ni(2+): H91, H93, E97, and H136.

It belongs to the acireductone dioxygenase (ARD) family. Monomer. Interacts with MMP14. The cofactor is Fe(2+). It depends on Ni(2+) as a cofactor.

Its subcellular location is the cytoplasm. It localises to the nucleus. The protein resides in the cell membrane. The catalysed reaction is 1,2-dihydroxy-5-(methylsulfanyl)pent-1-en-3-one + O2 = 4-methylsulfanyl-2-oxobutanoate + formate + 2 H(+). It carries out the reaction 1,2-dihydroxy-5-(methylsulfanyl)pent-1-en-3-one + O2 = 3-(methylsulfanyl)propanoate + CO + formate + 2 H(+). It participates in amino-acid biosynthesis; L-methionine biosynthesis via salvage pathway; L-methionine from S-methyl-5-thio-alpha-D-ribose 1-phosphate: step 5/6. Functionally, catalyzes 2 different reactions between oxygen and the acireductone 1,2-dihydroxy-3-keto-5-methylthiopentene (DHK-MTPene) depending upon the metal bound in the active site. Fe-containing acireductone dioxygenase (Fe-ARD) produces formate and 2-keto-4-methylthiobutyrate (KMTB), the alpha-ketoacid precursor of methionine in the methionine recycle pathway. Ni-containing acireductone dioxygenase (Ni-ARD) produces methylthiopropionate, carbon monoxide and formate, and does not lie on the methionine recycle pathway. This Danio rerio (Zebrafish) protein is Acireductone dioxygenase (adi1).